Consider the following 315-residue polypeptide: Glutaminase (315 aa).

Substrate contacts are provided by Ser-70, Asn-120, Glu-166, Asn-173, Tyr-197, Tyr-249, and Val-267.

This sequence belongs to the glutaminase family. As to quaternary structure, homotetramer.

It catalyses the reaction L-glutamine + H2O = L-glutamate + NH4(+). The chain is Glutaminase from Mesorhizobium japonicum (strain LMG 29417 / CECT 9101 / MAFF 303099) (Mesorhizobium loti (strain MAFF 303099)).